Here is a 272-residue protein sequence, read N- to C-terminus: ATP phosphoribosyltransferase regulatory subunit (272 aa).

It belongs to the class-II aminoacyl-tRNA synthetase family. HisZ subfamily. Heteromultimer composed of HisG and HisZ subunits.

Its subcellular location is the cytoplasm. It participates in amino-acid biosynthesis; L-histidine biosynthesis; L-histidine from 5-phospho-alpha-D-ribose 1-diphosphate: step 1/9. Its function is as follows. Required for the first step of histidine biosynthesis. May allow the feedback regulation of ATP phosphoribosyltransferase activity by histidine. This is ATP phosphoribosyltransferase regulatory subunit from Staphylococcus aureus (strain Mu3 / ATCC 700698).